Consider the following 448-residue polypeptide: Divalent metal cation transporter MntH (448 aa).

The next 11 membrane-spanning stretches (helical) occupy residues L41 to W61, S69 to L89, G117 to I137, F147 to F167, I176 to V196, I215 to P235, F270 to F290, L307 to A327, V363 to E383, L384 to V404, and I424 to T444.

It belongs to the NRAMP family.

Its subcellular location is the cell membrane. Its function is as follows. H(+)-stimulated, divalent metal cation uptake system. This chain is Divalent metal cation transporter MntH, found in Listeria innocua serovar 6a (strain ATCC BAA-680 / CLIP 11262).